Here is a 202-residue protein sequence, read N- to C-terminus: Na(+)-translocating NADH-quinone reductase subunit E (202 aa).

The next 6 helical transmembrane spans lie at 11-31 (SIFM…FLAV), 41-61 (LGVA…IIYF), 81-101 (FLGF…LEMV), 114-134 (GIYL…LFMV), 144-164 (LVYG…LAGI), and 180-200 (LGIT…FSGI).

The protein belongs to the NqrDE/RnfAE family. Composed of six subunits; NqrA, NqrB, NqrC, NqrD, NqrE and NqrF.

The protein resides in the cell inner membrane. It carries out the reaction a ubiquinone + n Na(+)(in) + NADH + H(+) = a ubiquinol + n Na(+)(out) + NAD(+). Functionally, NQR complex catalyzes the reduction of ubiquinone-1 to ubiquinol by two successive reactions, coupled with the transport of Na(+) ions from the cytoplasm to the periplasm. NqrA to NqrE are probably involved in the second step, the conversion of ubisemiquinone to ubiquinol. The polypeptide is Na(+)-translocating NADH-quinone reductase subunit E (Psychromonas ingrahamii (strain DSM 17664 / CCUG 51855 / 37)).